Reading from the N-terminus, the 332-residue chain is 2,3-diketo-L-gulonate reductase (332 aa).

Histidine 44 serves as the catalytic Proton donor. NAD(+) is bound by residues 168–174 (ITMVDMS), 224–225 (WK), and 304–306 (GHE).

This sequence belongs to the LDH2/MDH2 oxidoreductase family. DlgD subfamily. As to quaternary structure, homodimer.

The protein localises to the cytoplasm. It catalyses the reaction 3-dehydro-L-gulonate + NAD(+) = 2,3-dioxo-L-gulonate + NADH + H(+). The enzyme catalyses 3-dehydro-L-gulonate + NADP(+) = 2,3-dioxo-L-gulonate + NADPH + H(+). In terms of biological role, catalyzes the reduction of 2,3-diketo-L-gulonate in the presence of NADH, to form 3-keto-L-gulonate. The chain is 2,3-diketo-L-gulonate reductase from Shigella boydii serotype 4 (strain Sb227).